Here is a 223-residue protein sequence, read N- to C-terminus: Type 3 secretion system stator protein (223 aa).

This sequence belongs to the SctL stator family. The core secretion machinery of the T3SS is composed of approximately 20 different proteins, including cytoplasmic components, a base, an export apparatus and a needle. This subunit is part of the cytosolic complex. Interacts directly with YscN/SctN (T3SS ATPase) and YscQ/SctQ (the major sorting platform component). Forms homodimers.

Its subcellular location is the cytoplasm. Functionally, component of the type III secretion system (T3SS), also called injectisome, which is used to inject bacterial effector proteins into eukaryotic host cells. Acts as a regulator of the YscN/SctN ATPase activity. Overexpression of YscL/SctL abolishes type III secretion and down-regulates the expression of secretion apparatus components. This Yersinia enterocolitica protein is Type 3 secretion system stator protein.